The chain runs to 809 residues: Leucine-rich repeat and calponin homology domain-containing protein (809 aa).

The disordered stretch occupies residues Gly-27 to Ser-53. Over residues Ser-34 to His-44 the composition is skewed to gly residues. 9 LRR repeats span residues Glu-72–Tyr-96, Leu-98–Phe-121, Ala-122–Leu-144, Ser-145–Pro-168, Gln-170–Leu-189, Gln-191–Leu-213, Arg-214–Leu-236, Leu-238–Met-258, and Thr-260–Gly-282. 3 disordered regions span residues Thr-295–Val-373, Leu-423–Asp-442, and Lys-490–Val-550. Polar residues predominate over residues His-319 to Asn-336. The span at Gly-351–Ser-368 shows a compositional bias: basic and acidic residues. Residues Asn-518–Ile-532 are compositionally biased toward polar residues. The 115-residue stretch at Gln-662–Gly-776 folds into the Calponin-homology (CH) domain. The tract at residues Gly-783–Ala-809 is disordered. Residues Ala-788–Ala-809 are compositionally biased toward polar residues.

It localises to the cytoplasm. The protein resides in the cytoskeleton. Its subcellular location is the cell cortex. It is found in the cleavage furrow. Functionally, may play a role in the stabilization of the actin-rich cell cortex during cell division. The protein is Leucine-rich repeat and calponin homology domain-containing protein of Drosophila melanogaster (Fruit fly).